The chain runs to 212 residues: MSQSTIHKIAVKKRTETGKNENNRLRSSGMIPVNIIGAGVATSGAVNEKELAKMVHSGIRQSTLIELDVEGQGQQKVFVKEIQRFPEIDRIRHVDFYKVVPGQKIVTKIGIETTGVAKGSKTGGQFEHIIHEIRVKTIPEDLLENLTIDVTDLDVGDSIKISQLKVPASWEILINGDPIVTSVNKTKALLAAERAEAKGAVPDDAKAKKGKK.

The tract at residues 1–25 is disordered; the sequence is MSQSTIHKIAVKKRTETGKNENNRL. Residues 13–24 are compositionally biased toward basic and acidic residues; it reads KRTETGKNENNR.

The protein belongs to the bacterial ribosomal protein bL25 family. CTC subfamily. In terms of assembly, part of the 50S ribosomal subunit; part of the 5S rRNA/L5/L18/L25 subcomplex. Contacts the 5S rRNA. Binds to the 5S rRNA independently of L5 and L18.

In terms of biological role, this is one of the proteins that binds to the 5S RNA in the ribosome where it forms part of the central protuberance. The polypeptide is Large ribosomal subunit protein bL25 (Leptospira borgpetersenii serovar Hardjo-bovis (strain L550)).